Here is a 155-residue protein sequence, read N- to C-terminus: 6,7-dimethyl-8-ribityllumazine synthase (155 aa).

Residues F22, 56 to 58, and 80 to 82 each bind 5-amino-6-(D-ribitylamino)uracil; these read AFE and AVI. 85–86 lines the (2S)-2-hydroxy-3-oxobutyl phosphate pocket; sequence AT. The active-site Proton donor is H88. A 5-amino-6-(D-ribitylamino)uracil-binding site is contributed by F113. Position 127 (R127) interacts with (2S)-2-hydroxy-3-oxobutyl phosphate.

Belongs to the DMRL synthase family.

It carries out the reaction (2S)-2-hydroxy-3-oxobutyl phosphate + 5-amino-6-(D-ribitylamino)uracil = 6,7-dimethyl-8-(1-D-ribityl)lumazine + phosphate + 2 H2O + H(+). The protein operates within cofactor biosynthesis; riboflavin biosynthesis; riboflavin from 2-hydroxy-3-oxobutyl phosphate and 5-amino-6-(D-ribitylamino)uracil: step 1/2. In terms of biological role, catalyzes the formation of 6,7-dimethyl-8-ribityllumazine by condensation of 5-amino-6-(D-ribitylamino)uracil with 3,4-dihydroxy-2-butanone 4-phosphate. This is the penultimate step in the biosynthesis of riboflavin. The protein is 6,7-dimethyl-8-ribityllumazine synthase of Clostridium acetobutylicum (strain ATCC 824 / DSM 792 / JCM 1419 / IAM 19013 / LMG 5710 / NBRC 13948 / NRRL B-527 / VKM B-1787 / 2291 / W).